The chain runs to 344 residues: DNA-directed RNA polymerase subunit alpha (344 aa).

An alpha N-terminal domain (alpha-NTD) region spans residues 1-246 (MPMERFLKDF…EFLFPLVDFE (246 aa)). The tract at residues 259-344 (ESSNLLDMSI…VLSKNVKISE (86 aa)) is alpha C-terminal domain (alpha-CTD).

Belongs to the RNA polymerase alpha chain family. In terms of assembly, homodimer. The RNAP catalytic core consists of 2 alpha, 1 beta, 1 beta' and 1 omega subunit. When a sigma factor is associated with the core the holoenzyme is formed, which can initiate transcription.

The catalysed reaction is RNA(n) + a ribonucleoside 5'-triphosphate = RNA(n+1) + diphosphate. DNA-dependent RNA polymerase catalyzes the transcription of DNA into RNA using the four ribonucleoside triphosphates as substrates. The protein is DNA-directed RNA polymerase subunit alpha of Borreliella afzelii (strain PKo) (Borrelia afzelii).